Consider the following 329-residue polypeptide: ATPase ASNA1 homolog 1 (329 aa).

26 to 33 is a binding site for ATP; sequence KGGVGKTT. The active site involves D55. 2 residues coordinate ATP: E235 and N262. Positions 271 and 274 each coordinate Zn(2+).

It belongs to the arsA ATPase family. In terms of assembly, homodimer.

It is found in the cytoplasm. It localises to the endoplasmic reticulum. ATPase required for the post-translational delivery of tail-anchored (TA) proteins to the endoplasmic reticulum. Recognizes and selectively binds the transmembrane domain of TA proteins in the cytosol. This complex then targets to the endoplasmic reticulum by membrane-bound receptors, where the tail-anchored protein is released for insertion. This process is regulated by ATP binding and hydrolysis. ATP binding drives the homodimer towards the closed dimer state, facilitating recognition of newly synthesized TA membrane proteins. ATP hydrolysis is required for insertion. Subsequently, the homodimer reverts towards the open dimer state, lowering its affinity for the membrane-bound receptor, and returning it to the cytosol to initiate a new round of targeting. The chain is ATPase ASNA1 homolog 1 from Paramecium tetraurelia.